The primary structure comprises 251 residues: Probable phosphatase Sama_2233 (251 aa).

Zn(2+) is bound by residues His8, His10, His16, His41, Glu74, His102, His132, Asp193, and His195.

Belongs to the PHP family. It depends on Zn(2+) as a cofactor.

The chain is Probable phosphatase Sama_2233 from Shewanella amazonensis (strain ATCC BAA-1098 / SB2B).